The primary structure comprises 330 residues: Aquaporin Lacbi1:307192 (330 aa).

Over M1–E40 the chain is Cytoplasmic. A helical membrane pass occupies residues A41–G61. Over N62–S71 the chain is Extracellular. The helical transmembrane segment at V72–A92 threads the bilayer. Over T93–Q124 the chain is Cytoplasmic. An NPA 1 motif is present at residues N99–C101. The helical transmembrane segment at I125–E145 threads the bilayer. Over S146–E157 the chain is Extracellular. A helical membrane pass occupies residues T158–A178. The Cytoplasmic portion of the chain corresponds to Q179 to R183. Residues A184–D204 traverse the membrane as a helical segment. Residues P205–S207 are Extracellular-facing. Residues F208–W228 form a helical membrane-spanning segment. Topologically, residues G229 to A264 are cytoplasmic. The short motif at N238–A240 is the NPA 2 element. Residues I265 to L285 traverse the membrane as a helical segment. Residues V286–V330 lie on the Extracellular side of the membrane. A disordered region spans residues R308 to V330. Over residues Q312 to V330 the composition is skewed to basic and acidic residues.

This sequence belongs to the MIP/aquaporin (TC 1.A.8) family.

It is found in the membrane. Water channel-like protein that does not show transport of water nor ammonium across membranes. The protein is Aquaporin Lacbi1:307192 of Laccaria bicolor (strain S238N-H82 / ATCC MYA-4686) (Bicoloured deceiver).